A 219-amino-acid polypeptide reads, in one-letter code: N-(5'-phosphoribosyl)anthranilate isomerase (219 aa).

The protein belongs to the TrpF family.

It catalyses the reaction N-(5-phospho-beta-D-ribosyl)anthranilate = 1-(2-carboxyphenylamino)-1-deoxy-D-ribulose 5-phosphate. The protein operates within amino-acid biosynthesis; L-tryptophan biosynthesis; L-tryptophan from chorismate: step 3/5. The sequence is that of N-(5'-phosphoribosyl)anthranilate isomerase from Dehalococcoides mccartyi (strain ATCC BAA-2266 / KCTC 15142 / 195) (Dehalococcoides ethenogenes (strain 195)).